The following is a 261-amino-acid chain: tRNA pseudouridine synthase A (261 aa).

D51 functions as the Nucleophile in the catalytic mechanism. Y109 lines the substrate pocket.

The protein belongs to the tRNA pseudouridine synthase TruA family. Homodimer.

It carries out the reaction uridine(38/39/40) in tRNA = pseudouridine(38/39/40) in tRNA. In terms of biological role, formation of pseudouridine at positions 38, 39 and 40 in the anticodon stem and loop of transfer RNAs. The protein is tRNA pseudouridine synthase A of Shewanella woodyi (strain ATCC 51908 / MS32).